The chain runs to 335 residues: Probable BOI-related E3 ubiquitin-protein ligase 3 (335 aa).

The segment at 196–232 (LEEKVKSLCVENQIWRDVAQSNEATVNALRSNLQQVL) is WRD domain. Residues 287-322 (CRSCGKGEASVLLLPCRHMCLCSVCGSSLNTCPICK) form an RING-type zinc finger.

In terms of assembly, interacts with the DELLA proteins GAI, RGA, RGL1, RGL2 and RGL3.

It carries out the reaction S-ubiquitinyl-[E2 ubiquitin-conjugating enzyme]-L-cysteine + [acceptor protein]-L-lysine = [E2 ubiquitin-conjugating enzyme]-L-cysteine + N(6)-ubiquitinyl-[acceptor protein]-L-lysine.. It functions in the pathway protein degradation; proteasomal ubiquitin-dependent pathway. Its function is as follows. Probable E3 ubiquitin-protein ligase. Has no effect on the stability of the DELLA proteins. This Arabidopsis thaliana (Mouse-ear cress) protein is Probable BOI-related E3 ubiquitin-protein ligase 3 (BRG3).